The primary structure comprises 271 residues: Elongation factor Ts (271 aa).

Residues 76–79 form an involved in Mg(2+) ion dislocation from EF-Tu region; sequence TDFV.

Belongs to the EF-Ts family.

The protein resides in the cytoplasm. Its function is as follows. Associates with the EF-Tu.GDP complex and induces the exchange of GDP to GTP. It remains bound to the aminoacyl-tRNA.EF-Tu.GTP complex up to the GTP hydrolysis stage on the ribosome. This Saccharopolyspora erythraea (strain ATCC 11635 / DSM 40517 / JCM 4748 / NBRC 13426 / NCIMB 8594 / NRRL 2338) protein is Elongation factor Ts.